We begin with the raw amino-acid sequence, 130 residues long: Small ribosomal subunit protein uS9 (130 aa).

Belongs to the universal ribosomal protein uS9 family.

The chain is Small ribosomal subunit protein uS9 from Delftia acidovorans (strain DSM 14801 / SPH-1).